Here is a 296-residue protein sequence, read N- to C-terminus: dTDP-4-dehydrorhamnose reductase (296 aa).

NADH contacts are provided by residues 10–12, 35–36, and 59–61; these read GQI, DL, and AYT. NADPH-binding positions include 11 to 12, 35 to 36, and 59 to 61; these read QI, DL, and AYT. Residue 100-101 participates in dTDP-beta-L-rhamnose binding; the sequence is TD. NADH is bound by residues Tyr-124 and Lys-128. Residues Tyr-124 and Lys-128 each coordinate NADPH. The active-site Proton donor/acceptor is the Tyr-124. Trp-149 is a dTDP-beta-L-rhamnose binding site.

Belongs to the dTDP-4-dehydrorhamnose reductase family. Homodimer. It depends on Mg(2+) as a cofactor.

The catalysed reaction is dTDP-beta-L-rhamnose + NADP(+) = dTDP-4-dehydro-beta-L-rhamnose + NADPH + H(+). It participates in carbohydrate biosynthesis; dTDP-L-rhamnose biosynthesis. In terms of biological role, involved in the biosynthesis of the dTDP-L-rhamnose which is an important component of lipopolysaccharide (LPS). Catalyzes the reduction of dTDP-6-deoxy-L-lyxo-4-hexulose to yield dTDP-L-rhamnose. RmlD uses NADH and NADPH nearly equally well. The protein is dTDP-4-dehydrorhamnose reductase of Sinorhizobium fredii (strain NBRC 101917 / NGR234).